A 396-amino-acid chain; its full sequence is Protein ANTAGONIST OF LIKE HETEROCHROMATIN PROTEIN 1 (396 aa).

Basic residues-rich tracts occupy residues 1–12 (MAPVKQKKKNKK) and 20–29 (KLAKNKEKKR). The tract at residues 1–29 (MAPVKQKKKNKKKPLDKAKKLAKNKEKKR) is disordered. A Nuclear localization signal motif is present at residues 6 to 13 (QKKKNKKK). The DDE Tnp4 domain occupies 183-348 (IDTTHIIMTL…IILVCCLLHN (166 aa)).

It belongs to the HARBI1 family. Interacts with core components of POLYCOMB REPRESSIVE COMPLEX 2 (PRC2), a PcG protein complex with H3K27me3 histone methyltransferase activity. Associates with plant-specific PRC2 accessory components such as MSI1, EMF2, VRN2, FIE and CLF. A divalent metal cation serves as cofactor. Expressed in roots, inflorescence stems, seedlings, leaves, flower buds, inflorescences, and siliques.

It is found in the nucleus. Its function is as follows. Transposase-derived protein that may have nuclease activity. Antagonist of polycomb-group (PcG) protein-mediated chromatin silencing, probably by preventing the association of POLYCOMB REPRESSIVE COMPLEX 2 (PRC2) with its accessory components. Needed for full reactivation of several floral homeotic genes that are repressed by PcG. This Arabidopsis thaliana (Mouse-ear cress) protein is Protein ANTAGONIST OF LIKE HETEROCHROMATIN PROTEIN 1.